A 393-amino-acid chain; its full sequence is NAD(P)H-quinone oxidoreductase subunit H, chloroplastic (393 aa).

The protein belongs to the complex I 49 kDa subunit family. NDH is composed of at least 16 different subunits, 5 of which are encoded in the nucleus.

Its subcellular location is the plastid. The protein localises to the chloroplast thylakoid membrane. The catalysed reaction is a plastoquinone + NADH + (n+1) H(+)(in) = a plastoquinol + NAD(+) + n H(+)(out). The enzyme catalyses a plastoquinone + NADPH + (n+1) H(+)(in) = a plastoquinol + NADP(+) + n H(+)(out). Its function is as follows. NDH shuttles electrons from NAD(P)H:plastoquinone, via FMN and iron-sulfur (Fe-S) centers, to quinones in the photosynthetic chain and possibly in a chloroplast respiratory chain. The immediate electron acceptor for the enzyme in this species is believed to be plastoquinone. Couples the redox reaction to proton translocation, and thus conserves the redox energy in a proton gradient. This is NAD(P)H-quinone oxidoreductase subunit H, chloroplastic from Solanum bulbocastanum (Wild potato).